A 182-amino-acid chain; its full sequence is Crossover junction endodeoxyribonuclease RuvC (182 aa).

Residues D7, E67, and D139 contribute to the active site. Mg(2+) is bound by residues D7, E67, and D139.

It belongs to the RuvC family. Homodimer which binds Holliday junction (HJ) DNA. The HJ becomes 2-fold symmetrical on binding to RuvC with unstacked arms; it has a different conformation from HJ DNA in complex with RuvA. In the full resolvosome a probable DNA-RuvA(4)-RuvB(12)-RuvC(2) complex forms which resolves the HJ. It depends on Mg(2+) as a cofactor.

The protein localises to the cytoplasm. The catalysed reaction is Endonucleolytic cleavage at a junction such as a reciprocal single-stranded crossover between two homologous DNA duplexes (Holliday junction).. The RuvA-RuvB-RuvC complex processes Holliday junction (HJ) DNA during genetic recombination and DNA repair. Endonuclease that resolves HJ intermediates. Cleaves cruciform DNA by making single-stranded nicks across the HJ at symmetrical positions within the homologous arms, yielding a 5'-phosphate and a 3'-hydroxyl group; requires a central core of homology in the junction. The consensus cleavage sequence is 5'-(A/T)TT(C/G)-3'. Cleavage occurs on the 3'-side of the TT dinucleotide at the point of strand exchange. HJ branch migration catalyzed by RuvA-RuvB allows RuvC to scan DNA until it finds its consensus sequence, where it cleaves and resolves the cruciform DNA. The sequence is that of Crossover junction endodeoxyribonuclease RuvC from Bordetella parapertussis (strain 12822 / ATCC BAA-587 / NCTC 13253).